Reading from the N-terminus, the 155-residue chain is uncharacterized protein (155 aa).

Residues 1-23 (MKIRSLSRFVLASTMFASFTASA) form the signal peptide.

The protein to E.coli YkfB.

This is an uncharacterized protein from Escherichia coli (strain K12).